We begin with the raw amino-acid sequence, 413 residues long: Cell division protein FtsZ 2 (413 aa).

GTP-binding positions include 132-134 (GTG), Glu-171, Arg-175, and Asp-218.

Belongs to the FtsZ family. In terms of assembly, homodimer. Polymerizes to form a dynamic ring structure in a strictly GTP-dependent manner. Interacts directly with several other division proteins.

It localises to the cytoplasm. Functionally, essential cell division protein that forms a contractile ring structure (Z ring) at the future cell division site. The regulation of the ring assembly controls the timing and the location of cell division. One of the functions of the FtsZ ring is to recruit other cell division proteins to the septum to produce a new cell wall between the dividing cells. Binds GTP and shows GTPase activity. This Thermococcus kodakarensis (strain ATCC BAA-918 / JCM 12380 / KOD1) (Pyrococcus kodakaraensis (strain KOD1)) protein is Cell division protein FtsZ 2.